Here is a 199-residue protein sequence, read N- to C-terminus: Pyridoxine/pyridoxamine 5'-phosphate oxidase (199 aa).

Residues 44 to 49 (RTVLLK), 59 to 60 (YT), Lys66, and Gln91 contribute to the FMN site. Lys49 contributes to the substrate binding site. 3 residues coordinate substrate: Tyr109, Arg113, and Ser117. FMN contacts are provided by residues 126–127 (QS) and Trp171. A substrate-binding site is contributed by 177–179 (RLH). FMN is bound at residue Arg181.

The protein belongs to the pyridoxamine 5'-phosphate oxidase family. As to quaternary structure, homodimer. The cofactor is FMN.

The catalysed reaction is pyridoxamine 5'-phosphate + O2 + H2O = pyridoxal 5'-phosphate + H2O2 + NH4(+). It carries out the reaction pyridoxine 5'-phosphate + O2 = pyridoxal 5'-phosphate + H2O2. The protein operates within cofactor metabolism; pyridoxal 5'-phosphate salvage; pyridoxal 5'-phosphate from pyridoxamine 5'-phosphate: step 1/1. Its pathway is cofactor metabolism; pyridoxal 5'-phosphate salvage; pyridoxal 5'-phosphate from pyridoxine 5'-phosphate: step 1/1. In terms of biological role, catalyzes the oxidation of either pyridoxine 5'-phosphate (PNP) or pyridoxamine 5'-phosphate (PMP) into pyridoxal 5'-phosphate (PLP). In Xanthomonas campestris pv. campestris (strain 8004), this protein is Pyridoxine/pyridoxamine 5'-phosphate oxidase.